The following is a 762-amino-acid chain: 5-methyltetrahydropteroyltriglutamate--homocysteine methyltransferase (762 aa).

5-methyltetrahydropteroyltri-L-glutamate-binding positions include 17-20 (REWK) and Lys-111. L-homocysteine-binding positions include 435-437 (IGS) and Glu-488. Residues 435–437 (IGS) and Glu-488 contribute to the L-methionine site. 5-methyltetrahydropteroyltri-L-glutamate is bound by residues 519-520 (RC) and Trp-565. L-homocysteine is bound at residue Asp-603. Residue Asp-603 participates in L-methionine binding. Glu-609 lines the 5-methyltetrahydropteroyltri-L-glutamate pocket. Residues His-645, Cys-647, and Glu-669 each contribute to the Zn(2+) site. His-698 (proton donor) is an active-site residue. Cys-730 contacts Zn(2+).

This sequence belongs to the vitamin-B12 independent methionine synthase family. Requires Zn(2+) as cofactor.

It catalyses the reaction 5-methyltetrahydropteroyltri-L-glutamate + L-homocysteine = tetrahydropteroyltri-L-glutamate + L-methionine. It functions in the pathway amino-acid biosynthesis; L-methionine biosynthesis via de novo pathway; L-methionine from L-homocysteine (MetE route): step 1/1. In terms of biological role, catalyzes the transfer of a methyl group from 5-methyltetrahydrofolate to homocysteine resulting in methionine formation. The chain is 5-methyltetrahydropteroyltriglutamate--homocysteine methyltransferase from Bacillus cytotoxicus (strain DSM 22905 / CIP 110041 / 391-98 / NVH 391-98).